The sequence spans 450 residues: Glucose-6-phosphate isomerase (450 aa).

T38 carries the post-translational modification Phosphothreonine. The active-site Proton donor is the E290. Catalysis depends on residues H311 and K425.

It belongs to the GPI family.

It localises to the cytoplasm. The catalysed reaction is alpha-D-glucose 6-phosphate = beta-D-fructose 6-phosphate. It functions in the pathway carbohydrate biosynthesis; gluconeogenesis. Its pathway is carbohydrate degradation; glycolysis; D-glyceraldehyde 3-phosphate and glycerone phosphate from D-glucose: step 2/4. Functionally, catalyzes the reversible isomerization of glucose-6-phosphate to fructose-6-phosphate. This is Glucose-6-phosphate isomerase from Bacillus subtilis (strain 168).